A 299-amino-acid polypeptide reads, in one-letter code: 4-hydroxy-tetrahydrodipicolinate synthase (299 aa).

T51 contacts pyruvate. Y139 (proton donor/acceptor) is an active-site residue. Catalysis depends on K167, which acts as the Schiff-base intermediate with substrate. Residue I209 coordinates pyruvate.

It belongs to the DapA family. As to quaternary structure, homotetramer; dimer of dimers.

The protein localises to the cytoplasm. It carries out the reaction L-aspartate 4-semialdehyde + pyruvate = (2S,4S)-4-hydroxy-2,3,4,5-tetrahydrodipicolinate + H2O + H(+). The protein operates within amino-acid biosynthesis; L-lysine biosynthesis via DAP pathway; (S)-tetrahydrodipicolinate from L-aspartate: step 3/4. Catalyzes the condensation of (S)-aspartate-beta-semialdehyde [(S)-ASA] and pyruvate to 4-hydroxy-tetrahydrodipicolinate (HTPA). The protein is 4-hydroxy-tetrahydrodipicolinate synthase of Methylobacterium radiotolerans (strain ATCC 27329 / DSM 1819 / JCM 2831 / NBRC 15690 / NCIMB 10815 / 0-1).